The chain runs to 169 residues: Peptidyl-prolyl cis-trans isomerase (169 aa).

The PPIase cyclophilin-type domain occupies 5–168 (FFDMTIGGQP…SEVKIAKCGQ (164 aa)).

The protein belongs to the cyclophilin-type PPIase family.

It is found in the cytoplasm. The enzyme catalyses [protein]-peptidylproline (omega=180) = [protein]-peptidylproline (omega=0). Binds cyclosporin A (CsA). CsA mediates some of its effects via an inhibitory action on PPIase. Functionally, PPIases accelerate the folding of proteins. It catalyzes the cis-trans isomerization of proline imidic peptide bonds in oligopeptides. The chain is Peptidyl-prolyl cis-trans isomerase from Unspecified eudicot DB-1992.